Here is a 246-residue protein sequence, read N- to C-terminus: uncharacterized protein (246 aa).

Ser194 is subject to Phosphoserine.

This is an uncharacterized protein from Schizosaccharomyces pombe (strain 972 / ATCC 24843) (Fission yeast).